A 37-amino-acid polypeptide reads, in one-letter code: Large ribosomal subunit protein bL36A (37 aa).

Belongs to the bacterial ribosomal protein bL36 family.

The polypeptide is Large ribosomal subunit protein bL36A (Kocuria rhizophila (strain ATCC 9341 / DSM 348 / NBRC 103217 / DC2201)).